The chain runs to 37 residues: Large ribosomal subunit protein bL36c (37 aa).

This sequence belongs to the bacterial ribosomal protein bL36 family.

The protein localises to the plastid. Its subcellular location is the chloroplast. The chain is Large ribosomal subunit protein bL36c (rpl36) from Pisum sativum (Garden pea).